The chain runs to 825 residues: Tuftelin-interacting protein 11 (825 aa).

A disordered region spans residues 1–135 (MSMSHLYGKD…RTFAGGIKSN (135 aa)). Residues 11–25 (EDSDGVEMENFEITD) are compositionally biased toward acidic residues. Basic and acidic residues-rich tracts occupy residues 41–61 (QTKEEATYGMWAERDSDDERP) and 85–114 (PAAEEKSDSDSDSETQARRETFPKDFEAKK). A compositionally biased stretch (polar residues) spans 122-135 (KPSQRTFAGGIKSN). Residues 145–191 (TKGIGQKLLQKMGYVQGRGLGKNAQGIIAPIEAKQRKGKGAVGAYGS) form the G-patch domain.

It belongs to the TFP11/STIP family. In terms of assembly, identified in the spliceosome C complex.

The protein resides in the nucleus. Functionally, involved in pre-mRNA splicing, specifically in spliceosome disassembly during late-stage splicing events. The chain is Tuftelin-interacting protein 11 (tfip11) from Xenopus tropicalis (Western clawed frog).